We begin with the raw amino-acid sequence, 202 residues long: Dephospho-CoA kinase (202 aa).

The 198-residue stretch at 4–201 (VVALTGGIAS…QKYLAMSRQN (198 aa)) folds into the DPCK domain. 12–17 (ASGKTT) contacts ATP.

The protein belongs to the CoaE family.

It localises to the cytoplasm. It catalyses the reaction 3'-dephospho-CoA + ATP = ADP + CoA + H(+). It functions in the pathway cofactor biosynthesis; coenzyme A biosynthesis; CoA from (R)-pantothenate: step 5/5. In terms of biological role, catalyzes the phosphorylation of the 3'-hydroxyl group of dephosphocoenzyme A to form coenzyme A. This is Dephospho-CoA kinase from Vibrio cholerae serotype O1 (strain ATCC 39315 / El Tor Inaba N16961).